The following is a 242-amino-acid chain: 1-(5-phosphoribosyl)-5-[(5-phosphoribosylamino)methylideneamino] imidazole-4-carboxamide isomerase (242 aa).

The active-site Proton acceptor is the Asp-10. Asp-131 (proton donor) is an active-site residue.

The protein belongs to the HisA/HisF family.

The protein localises to the cytoplasm. It carries out the reaction 1-(5-phospho-beta-D-ribosyl)-5-[(5-phospho-beta-D-ribosylamino)methylideneamino]imidazole-4-carboxamide = 5-[(5-phospho-1-deoxy-D-ribulos-1-ylimino)methylamino]-1-(5-phospho-beta-D-ribosyl)imidazole-4-carboxamide. The protein operates within amino-acid biosynthesis; L-histidine biosynthesis; L-histidine from 5-phospho-alpha-D-ribose 1-diphosphate: step 4/9. This Granulibacter bethesdensis (strain ATCC BAA-1260 / CGDNIH1) protein is 1-(5-phosphoribosyl)-5-[(5-phosphoribosylamino)methylideneamino] imidazole-4-carboxamide isomerase.